The chain runs to 452 residues: Scaffold protein ILK (452 aa).

Residue Met1 is modified to N-acetylmethionine. ANK repeat units follow at residues 2–30 (DDIFTQCREGNAVAVRLWLDNTENDLNQG), 31–63 (DDHGFSPLHWACREGRSAVVEMLIMRGARINVM), 64–96 (NRGDDTPLHLAASHGHRDIVQKLLQYKADINAV), 97–129 (NEHGNVPLHYACFWGQDQVAEDLVANGALVSIC), and 130–174 (NKYG…GTTR). Positions 33–139 (HGFSPLHWAC…NKYGEMPVDK (107 aa)) are interaction with LIMS1. Phosphothreonine; by PAK1 is present on Thr173. Residues 180 to 212 (GTLNKHSGIDFKQLNFLTKLNENHSGELWKGRW) form a PH-like; mediates interaction with TGFB1I1 region. Position 186 is a phosphoserine (Ser186). The 254-residue stretch at 193–446 (LNFLTKLNEN…PKFDMIVPIL (254 aa)) folds into the Protein kinase domain. Positions 200, 202, 203, 204, and 220 each coordinate ATP. The residue at position 246 (Ser246) is a Phosphoserine; by PAK1. ATP contacts are provided by His270, Met272, and Asn279. A Mg(2+)-binding site is contributed by Asp339. Residue Lys341 coordinates ATP. A Nuclear localization signal motif is present at residues 363-371 (KKPEDTNRR). Lys426 carries the N6-acetyllysine modification.

The protein belongs to the protein kinase superfamily. TKL Ser/Thr protein kinase family. Component of the heterotrimeric IPP (ILK-PINCH-PARVIN) complex composed of ILK, LIMS1/PINCH and PARVA; the complex binds to F-actin via the C-terminal tail of LIMS1 and the N-terminal region of PARVA, promoting F-actin filament bundling. Formation of the IPP complex is dependent on protein kinase C and precedes integrin-mediated cell adhesion and spreading. ILK also interacts with LIMS2/PINCH2 and with PARVB and PARVG which may substitute for LIMS1 and PARVA in the IPP complex; PARVA and PARVB compete for the same binding site. Interaction with PARVG promotes the establishment of cell polarity required for leukocyte migration. Interacts with the cytoplasmic domain of integrin ITGB1 and may also interact with integrins ITGB2, ITGB3 and/or ITGB5. Interacts probably also with TGFB1I1. Interacts (via ANK repeats) with EPHA1 (via SAM domain); stimulated by EFNA1 but independent of the kinase activity of EPHA1. Interacts with FERMT2. Interacts with LIMD2; leading to activate the protein kinase activity. Interacts with PXN/PAXILLIN (via LD motif 4). Interacts with CCDC25 (via cytoplasmic region); initiating the ILK-PARVB cascade to induce cytoskeleton rearrangement and directional migration of cells. Interacts with IQGAP1; the interaction is required for localization of IQGAP1 to the cell cortex. In terms of processing, phosphorylation by PAK1 modulates ILK subcellular location by promoting its nuclear export. In terms of tissue distribution, highly expressed in heart followed by skeletal muscle, pancreas and kidney. Weakly expressed in placenta, lung and liver.

The protein resides in the cell junction. It localises to the focal adhesion. Its subcellular location is the cell membrane. The protein localises to the cell projection. It is found in the lamellipodium. The protein resides in the cytoplasm. It localises to the myofibril. Its subcellular location is the sarcomere. The protein localises to the nucleus. It is found in the cytoskeleton. The protein resides in the microtubule organizing center. It localises to the centrosome. Its subcellular location is the cell cortex. In terms of biological role, scaffold protein which mediates protein-protein interactions during a range of cellular events including focal adhesion assembly, cell adhesion and cell migration. Regulates integrin-mediated signal transduction by contributing to inside-out integrin activation. Recruits PARVA and LIMS1/PITCH to form the heterotrimeric IPP (ILK-PINCH-PARVIN) complex which binds to F-actin via the C-terminal tail of LIMS1 and the N-terminal region of PARVA, promoting F-actin filament bundling, a process required to generate force for actin cytoskeleton reorganization and subsequent dynamic cell adhesion events such as cell spreading and migration. Binding to PARVA promotes effective assembly of ILK into focal adhesions while PARVA-bound ILK can simultaneously engage integrin-beta cytoplasmic tails to mediate cell adhesion. Plays a role with PARVG in promoting the cell adhesion and spreading of leukocytes. Acts as an upstream effector of both AKT1/PKB and GSK3. Mediates trafficking of caveolae to the cell surface in an ITGB1-dependent manner by promoting the recruitment of IQGAP1 to the cell cortex which cooperates with its effector DIAPH1 to locally stabilize microtubules and allow stable insertion of caveolae into the plasma membrane. Required for the maintenance of mitotic spindle integrity by promoting phosphorylation of TACC3 by AURKA. Associates with chromatin and may act as a negative regulator of transcription when located in the nucleus. The polypeptide is Scaffold protein ILK (Homo sapiens (Human)).